The sequence spans 278 residues: Insulin-like growth factor-binding protein-like 1 (278 aa).

The signal sequence occupies residues 1–25 (MPRLSLLLPLLLLLLLPLLPPLSPS). The IGFBP N-terminal domain occupies 34 to 109 (RRPKCGPCRP…PEGTGLCVCA (76 aa)). 7 disulfides stabilise this stretch: cysteine 38–cysteine 63, cysteine 41–cysteine 65, cysteine 46–cysteine 66, cysteine 52–cysteine 69, cysteine 77–cysteine 91, cysteine 85–cysteine 106, and cysteine 115–cysteine 151. Residues 95–153 (AAGAAPEGTGLCVCAQRGTVCGSDGRSYPSVCALRLRARHTPRAHPGHLHKARDGPCEF) enclose the Kazal-like domain. In terms of domain architecture, Ig-like C2-type spans 155–259 (PVVVVPPRSV…GEAESHSTVT (105 aa)). N-linked (GlcNAc...) asparagine glycosylation occurs at asparagine 166. An intrachain disulfide couples cysteine 176 to cysteine 243.

As to expression, expressed at the highest level in both brain and testis, with lower levels in the prostate, bladder and lung.

The protein localises to the secreted. IGF-binding proteins prolong the half-life of IGFs and have been shown to either inhibit or stimulate the growth promoting effects of the IGFs in cell culture. They alter the interaction of IGFs with their cell surface receptors. May be a putative tumor suppressor protein. This Homo sapiens (Human) protein is Insulin-like growth factor-binding protein-like 1 (IGFBPL1).